Reading from the N-terminus, the 880-residue chain is Alanine--tRNA ligase (880 aa).

4 residues coordinate Zn(2+): His567, His571, Cys669, and His673.

Belongs to the class-II aminoacyl-tRNA synthetase family. Zn(2+) is required as a cofactor.

The protein resides in the cytoplasm. It catalyses the reaction tRNA(Ala) + L-alanine + ATP = L-alanyl-tRNA(Ala) + AMP + diphosphate. Catalyzes the attachment of alanine to tRNA(Ala) in a two-step reaction: alanine is first activated by ATP to form Ala-AMP and then transferred to the acceptor end of tRNA(Ala). Also edits incorrectly charged Ser-tRNA(Ala) and Gly-tRNA(Ala) via its editing domain. The sequence is that of Alanine--tRNA ligase from Bacillus anthracis.